A 189-amino-acid polypeptide reads, in one-letter code: Chitin synthase 1 (189 aa).

It belongs to the chitin synthase family.

It localises to the cell membrane. The enzyme catalyses [(1-&gt;4)-N-acetyl-beta-D-glucosaminyl](n) + UDP-N-acetyl-alpha-D-glucosamine = [(1-&gt;4)-N-acetyl-beta-D-glucosaminyl](n+1) + UDP + H(+). In terms of biological role, polymerizes chitin, a structural polymer of the cell wall and septum, by transferring the sugar moiety of UDP-GlcNAc to the non-reducing end of the growing chitin polymer. The sequence is that of Chitin synthase 1 (CHS1) from Schizophyllum commune (Split gill fungus).